A 160-amino-acid polypeptide reads, in one-letter code: Transcriptional regulator MraZ (160 aa).

SpoVT-AbrB domains lie at 5–50 (KFET…EGVY) and 93–136 (AIEC…SQAE).

Belongs to the MraZ family. Forms oligomers.

The protein resides in the cytoplasm. The protein localises to the nucleoid. The sequence is that of Transcriptional regulator MraZ from Geotalea uraniireducens (strain Rf4) (Geobacter uraniireducens).